We begin with the raw amino-acid sequence, 91 residues long: Elongation factor 1-beta (91 aa).

Belongs to the EF-1-beta/EF-1-delta family.

Promotes the exchange of GDP for GTP in EF-1-alpha/GDP, thus allowing the regeneration of EF-1-alpha/GTP that could then be used to form the ternary complex EF-1-alpha/GTP/AAtRNA. In Thermococcus onnurineus (strain NA1), this protein is Elongation factor 1-beta.